We begin with the raw amino-acid sequence, 100 residues long: MLALNNYLILSAILFSIGTIGVLVRRNAIVIFMCVEMMLNAVNLTFIAFSKYLGNIDGQIFVFFVMTVAAAEAAVGLALMIAFYKNRESIDVEDVNLMKW.

A run of 3 helical transmembrane segments spans residues 4-24, 29-49, and 60-80; these read LNNY…GVLV, IVIF…FIAF, and IFVF…LALM.

The protein belongs to the complex I subunit 4L family. As to quaternary structure, NDH-1 is composed of 14 different subunits. Subunits NuoA, H, J, K, L, M, N constitute the membrane sector of the complex.

Its subcellular location is the cell inner membrane. It carries out the reaction a quinone + NADH + 5 H(+)(in) = a quinol + NAD(+) + 4 H(+)(out). In terms of biological role, NDH-1 shuttles electrons from NADH, via FMN and iron-sulfur (Fe-S) centers, to quinones in the respiratory chain. The immediate electron acceptor for the enzyme in this species is believed to be ubiquinone. Couples the redox reaction to proton translocation (for every two electrons transferred, four hydrogen ions are translocated across the cytoplasmic membrane), and thus conserves the redox energy in a proton gradient. This is NADH-quinone oxidoreductase subunit K 2 from Geotalea uraniireducens (strain Rf4) (Geobacter uraniireducens).